A 48-amino-acid polypeptide reads, in one-letter code: Putative ATP synthase protein 8-like protein (48 aa).

The helical transmembrane segment at Gly-17–Leu-37 threads the bilayer.

The protein belongs to the ATPase protein 8 family.

It localises to the membrane. The polypeptide is Putative ATP synthase protein 8-like protein (Eremothecium gossypii (strain ATCC 10895 / CBS 109.51 / FGSC 9923 / NRRL Y-1056) (Yeast)).